The primary structure comprises 208 residues: GTP-binding protein Rho1 (208 aa).

19–26 (GDGACGKT) provides a ligand contact to GTP. Positions 41–49 (YVPTVFDNY) match the Effector region motif. GTP contacts are provided by residues 66-70 (DTAGQ) and 124-127 (CKAD). A disordered region spans residues 188–208 (GKQGKSKPKTKSSKKKKCVVL). Over residues 191 to 208 (GKSKPKTKSSKKKKCVVL) the composition is skewed to basic residues. Cys-205 carries the cysteine methyl ester modification. Cys-205 carries S-geranylgeranyl cysteine lipidation. Residues 206–208 (VVL) constitute a propeptide, removed in mature form.

Belongs to the small GTPase superfamily. Rho family.

The protein localises to the cell membrane. The chain is GTP-binding protein Rho1 (RHO1) from Kluyveromyces lactis (strain ATCC 8585 / CBS 2359 / DSM 70799 / NBRC 1267 / NRRL Y-1140 / WM37) (Yeast).